Consider the following 451-residue polypeptide: PTS system cellobiose-specific EIIC component (451 aa).

The PTS EIIC type-3 domain occupies L8–F423. Transmembrane regions (helical) follow at residues G31–L51, L72–A92, L104–F124, G138–V158, F187–L207, L227–L247, T250–M270, F293–M313, I347–V367, and I407–W427.

It is found in the cell membrane. Its function is as follows. The phosphoenolpyruvate-dependent sugar phosphotransferase system (sugar PTS), a major carbohydrate active transport system, catalyzes the phosphorylation of incoming sugar substrates concomitantly with their translocation across the cell membrane. The enzyme II CelABD PTS system is involved in cellobiose transport. The sequence is that of PTS system cellobiose-specific EIIC component from Geobacillus stearothermophilus (Bacillus stearothermophilus).